A 59-amino-acid chain; its full sequence is Large ribosomal subunit protein uL30 (59 aa).

The protein belongs to the universal ribosomal protein uL30 family. As to quaternary structure, part of the 50S ribosomal subunit.

The protein is Large ribosomal subunit protein uL30 of Buchnera aphidicola subsp. Schizaphis graminum (strain Sg).